Here is a 306-residue protein sequence, read N- to C-terminus: UDP-3-O-acyl-N-acetylglucosamine deacetylase (306 aa).

Zn(2+) is bound by residues H81, H241, and D245. H268 serves as the catalytic Proton donor.

This sequence belongs to the LpxC family. It depends on Zn(2+) as a cofactor.

The catalysed reaction is a UDP-3-O-[(3R)-3-hydroxyacyl]-N-acetyl-alpha-D-glucosamine + H2O = a UDP-3-O-[(3R)-3-hydroxyacyl]-alpha-D-glucosamine + acetate. Its pathway is glycolipid biosynthesis; lipid IV(A) biosynthesis; lipid IV(A) from (3R)-3-hydroxytetradecanoyl-[acyl-carrier-protein] and UDP-N-acetyl-alpha-D-glucosamine: step 2/6. Catalyzes the hydrolysis of UDP-3-O-myristoyl-N-acetylglucosamine to form UDP-3-O-myristoylglucosamine and acetate, the committed step in lipid A biosynthesis. The sequence is that of UDP-3-O-acyl-N-acetylglucosamine deacetylase from Hydrogenovibrio crunogenus (strain DSM 25203 / XCL-2) (Thiomicrospira crunogena).